Here is a 324-residue protein sequence, read N- to C-terminus: Probable RuBisCO transcriptional regulator (324 aa).

The HTH lysR-type domain maps to 8–65 (FSLEQLRILKAIATEGSFKKAAESLYMTQPAISLQIQTLEKKLNIALFDRSGRRALMT). The segment at residues 25 to 44 (FKKAAESLYMTQPAISLQIQ) is a DNA-binding region (H-T-H motif).

It belongs to the LysR transcriptional regulatory family.

The protein resides in the plastid. It localises to the cyanelle. In terms of biological role, trans-acting transcriptional regulator of RuBisCO genes (rbcL and rbcS) expression. This chain is Probable RuBisCO transcriptional regulator (rbcR), found in Cyanophora paradoxa.